The sequence spans 1033 residues: PDZ domain-containing protein 7 (1033 aa).

PDZ domains lie at S86–R168 and I210–R293. The segment covering E323–S344 has biased composition (low complexity). Disordered regions lie at residues E323 to V380, K444 to S464, E754 to T864, and M943 to P1033. The segment covering A770 to S784 has biased composition (basic residues). Low complexity predominate over residues S785 to P797. Residues T862–A934 form the PDZ 3 domain. The segment covering P991–P1000 has biased composition (pro residues).

As to quaternary structure, homodimerizes (via PDZ2 domain). Component of USH2 complex, composed of ADGRV1, PDZD7, USH2A and WHRN. Interacts (via PDZ domains) with WHRN; the interaction is direct. Interacts with USH1G. Interacts with ADGRV1 (via the cytoplasmic region). Interacts with USH2A (via the cytoplasmic region). Interacts with MYO7A (via MyTH4-FERM domains). In terms of tissue distribution, weakly expressed in the inner ear. Expressed in the retinal pigment epithelium.

Its subcellular location is the cell projection. It localises to the cilium. It is found in the nucleus. The protein resides in the stereocilium. Functionally, in cochlear developing hair cells, essential in organizing the USH2 complex at stereocilia ankle links. Blocks inhibition of adenylate cyclase activity mediated by ADGRV1. This is PDZ domain-containing protein 7 from Homo sapiens (Human).